A 923-amino-acid polypeptide reads, in one-letter code: Isoleucine--tRNA ligase (923 aa).

The short motif at 57-67 (PYANGDIHIGT) is the 'HIGH' region element. Glu-561 lines the L-isoleucyl-5'-AMP pocket. A 'KMSKS' region motif is present at residues 602–606 (AMHKS). Lys-605 is an ATP binding site. 4 residues coordinate Zn(2+): Cys-895, Cys-898, Cys-915, and Cys-918.

Belongs to the class-I aminoacyl-tRNA synthetase family. IleS type 1 subfamily. Monomer. It depends on Zn(2+) as a cofactor.

It is found in the cytoplasm. The enzyme catalyses tRNA(Ile) + L-isoleucine + ATP = L-isoleucyl-tRNA(Ile) + AMP + diphosphate. Catalyzes the attachment of isoleucine to tRNA(Ile). As IleRS can inadvertently accommodate and process structurally similar amino acids such as valine, to avoid such errors it has two additional distinct tRNA(Ile)-dependent editing activities. One activity is designated as 'pretransfer' editing and involves the hydrolysis of activated Val-AMP. The other activity is designated 'posttransfer' editing and involves deacylation of mischarged Val-tRNA(Ile). The chain is Isoleucine--tRNA ligase from Brachyspira hyodysenteriae (strain ATCC 49526 / WA1).